The primary structure comprises 507 residues: MLLDELVRTTDAVASTRSRLAKVDALAQLLKRLDPADIPAAVGLLTAKPRQGRVGVGWRGMSAAMGEPAADPGLTLADLDAALDRLQALAGAGSAAERAATLRGLTAAATEREQAFIGGVLLGELRTGALEGVLTDAVARAAERSVEAVRRAAMLSGDLGSTALLALTGTAAELDAVGLKVGRPVQPMLAGTGASVTAALETTGEASVEYKLDGARIQVHRSGGDVRIFTRTLAEVTHRLPEVVEVVRGFPVHDVILDGETLALGEDGAPRPFQETMSRFGADAARTTVLHPWFFDVLHIDGRDLLDEPLSERIKVLEAIAPAHRIPGEITADPEVAGRISRDALAAGHEGVMLKSVGSLYAAGRRGSNWIKVKPVLTYDLVVLACEWGSGRRTGMLSNLHLGALDPAGEYGEPGGYVMVGKTFKGLTDALLQWQTKRFQEIEVRRTAGTVWVEPVTVVEIAIDGVQQSPRYPGRIALRFARVKGYREDKTAAEADTIQTLRALLRP.

Residue E209 participates in ATP binding. K211 serves as the catalytic N6-AMP-lysine intermediate. Residues R216, R231, E260, F295, R366, and K372 each coordinate ATP.

It belongs to the ATP-dependent DNA ligase family. The cofactor is Mg(2+).

It carries out the reaction ATP + (deoxyribonucleotide)n-3'-hydroxyl + 5'-phospho-(deoxyribonucleotide)m = (deoxyribonucleotide)n+m + AMP + diphosphate.. In terms of biological role, DNA ligase that seals nicks in double-stranded DNA during DNA replication, DNA recombination and DNA repair. This chain is Probable DNA ligase, found in Pseudarthrobacter chlorophenolicus (strain ATCC 700700 / DSM 12829 / CIP 107037 / JCM 12360 / KCTC 9906 / NCIMB 13794 / A6) (Arthrobacter chlorophenolicus).